Consider the following 336-residue polypeptide: MCYPLARKALFQLDPEHAHELTFRQLKRITGTPFEFFIRQSIATKPVTCMGLSFKNPLGLAAGLDKDGDCIDAFGAMGFGFIEIGTVTPRAQAGNDKPRLFRIVEAEGLINRMGFNNLGVDNLVENVKKAKYGGVIGINIGKNKDTPVEHGKDDYLICMDKIYPHAGYITINISSPNTPGLRTLQYGEALDDLLSAIKNKQGELQQKYQKYVPVAVKIAPDLSEEELIQIADSLIRHNIDGAIATNTTLDKRLVEGLNYCQQAGGLSGRPVQLRSTEVIRQLSQELRDKIPIIGVGGIDSLTAAREKIAAGASLIQIFSGFIYHGPKLIKDIVNHI.

FMN contacts are provided by residues 62 to 66 (AGLDK) and Thr-86. Lys-66 provides a ligand contact to substrate. Substrate is bound at residue 111–115 (NRMGF). Positions 139 and 172 each coordinate FMN. Asn-172 contributes to the substrate binding site. Ser-175 serves as the catalytic Nucleophile. A substrate-binding site is contributed by Asn-177. FMN-binding residues include Lys-217 and Thr-245. Substrate is bound at residue 246–247 (NT). FMN contacts are provided by residues Gly-268, Gly-297, and 318 to 319 (FS).

It belongs to the dihydroorotate dehydrogenase family. Type 2 subfamily. As to quaternary structure, monomer. Requires FMN as cofactor.

It is found in the cell membrane. The enzyme catalyses (S)-dihydroorotate + a quinone = orotate + a quinol. Its pathway is pyrimidine metabolism; UMP biosynthesis via de novo pathway; orotate from (S)-dihydroorotate (quinone route): step 1/1. Its function is as follows. Catalyzes the conversion of dihydroorotate to orotate with quinone as electron acceptor. This chain is Dihydroorotate dehydrogenase (quinone), found in Photorhabdus laumondii subsp. laumondii (strain DSM 15139 / CIP 105565 / TT01) (Photorhabdus luminescens subsp. laumondii).